The chain runs to 543 residues: Glucose-6-phosphate isomerase (543 aa).

Glutamate 353 acts as the Proton donor in catalysis. Catalysis depends on residues histidine 384 and lysine 504.

The protein belongs to the GPI family.

Its subcellular location is the cytoplasm. The catalysed reaction is alpha-D-glucose 6-phosphate = beta-D-fructose 6-phosphate. The protein operates within carbohydrate biosynthesis; gluconeogenesis. It participates in carbohydrate degradation; glycolysis; D-glyceraldehyde 3-phosphate and glycerone phosphate from D-glucose: step 2/4. In terms of biological role, catalyzes the reversible isomerization of glucose-6-phosphate to fructose-6-phosphate. This is Glucose-6-phosphate isomerase from Roseiflexus sp. (strain RS-1).